The sequence spans 194 residues: Small ribosomal subunit protein uS4c (194 aa).

The S4 RNA-binding domain maps to 82-143; that stretch reads MRLDNILFRL…KQRSKALIQD (62 aa).

It belongs to the universal ribosomal protein uS4 family. As to quaternary structure, part of the 30S ribosomal subunit. Contacts protein S5. The interaction surface between S4 and S5 is involved in control of translational fidelity.

The protein resides in the plastid. The protein localises to the chloroplast. Its function is as follows. One of the primary rRNA binding proteins, it binds directly to 16S rRNA where it nucleates assembly of the body of the 30S subunit. Functionally, with S5 and S12 plays an important role in translational accuracy. This is Small ribosomal subunit protein uS4c (rps4) from Bobartia gladiata (Sword rush-lily).